Here is a 151-residue protein sequence, read N- to C-terminus: Ribonuclease H (151 aa).

The 141-residue stretch at 1-141 folds into the RNase H type-1 domain; sequence MKHVDIFTDG…ADELARKGME (141 aa). Aspartate 9, glutamate 47, aspartate 69, and aspartate 133 together coordinate Mg(2+).

Belongs to the RNase H family. In terms of assembly, monomer. Mg(2+) serves as cofactor.

Its subcellular location is the cytoplasm. The catalysed reaction is Endonucleolytic cleavage to 5'-phosphomonoester.. Endonuclease that specifically degrades the RNA of RNA-DNA hybrids. The sequence is that of Ribonuclease H from Rhizobium johnstonii (strain DSM 114642 / LMG 32736 / 3841) (Rhizobium leguminosarum bv. viciae).